Consider the following 129-residue polypeptide: Putative zinc finger protein 702 (129 aa).

3 C2H2-type zinc fingers span residues tyrosine 34–histidine 56, tyrosine 62–histidine 84, and histidine 90–histidine 112.

The protein belongs to the krueppel C2H2-type zinc-finger protein family.

The protein resides in the nucleus. In terms of biological role, may be involved in transcriptional regulation. This is Putative zinc finger protein 702 (ZNF702P) from Homo sapiens (Human).